Reading from the N-terminus, the 507-residue chain is MKATKETLSPTRVKLTVEVPFDELKPSVDATYRKLARQVRVSGFRPGKVPPRILDQRLGRGVILDEAIQEALPRLYSEAVQAEEVDVLSRPEVDITEFADGAQLVFTAEMDVRPEVTLPEFGELELVVEPATVTDEQVEEHLTNLRDRFAVLKPVERPVQEGDFVSLDLSASVDGEAIEDATATGMSYEVGSGNLIDGIDEAIAGASDGDERTFDTELLAGEYTGRTAQVTAVVRGVKEKELPELDDDFATTASEFDTLEELRADVRTRLESNRKVEQLGEARDKMLDKLIELVEVPVPDSVLAGELEAREHRLGHELEHIGTDRATYLETLGQSAEEFDAEVRSSAGKAIRSQFILDAVIDAESIGLDQGELMEQILMRAQRAGVQPDQYAQQLAQGEGLTALMADVLRTKALFLLLENAKVVDTEGNAVELNLPRRPSGEAEDDVRDISDELDAEELEVPAAAPSAEVTAAAGDEATATATATDADTATDADGAGDSELPASETK.

A PPIase FKBP-type domain is found at Gly-162–Pro-243. The interval Asn-434–Lys-507 is disordered. The span at Glu-442 to Glu-460 shows a compositional bias: acidic residues. A compositionally biased stretch (low complexity) spans Val-461–Asp-488.

This sequence belongs to the FKBP-type PPIase family. Tig subfamily.

It localises to the cytoplasm. The enzyme catalyses [protein]-peptidylproline (omega=180) = [protein]-peptidylproline (omega=0). Its function is as follows. Involved in protein export. Acts as a chaperone by maintaining the newly synthesized protein in an open conformation. Functions as a peptidyl-prolyl cis-trans isomerase. In Parafrankia sp. (strain EAN1pec), this protein is Trigger factor.